Consider the following 345-residue polypeptide: Putative F-box protein At3g17265 (345 aa).

Residues 1-46 (MMFAYLPPDLESEILSRVPATFLKELQTTCKRWYALFRDPIFVKKN) enclose the F-box domain.

The sequence is that of Putative F-box protein At3g17265 from Arabidopsis thaliana (Mouse-ear cress).